Here is a 69-residue protein sequence, read N- to C-terminus: Amphipathic peptide Hp1404 (69 aa).

The signal sequence occupies residues 1 to 23 (MKTQFAILMITVVLMQMLVQTEG). Phe37 is subject to Phenylalanine amide. The propeptide occupies 41 to 69 (GLKNLDQLDDSFDSDLSDADVKLLREMFK).

Belongs to the non-disulfide-bridged peptide (NDBP) superfamily. Short antimicrobial peptide (group 4) family. As to expression, expressed by the venom gland.

It localises to the secreted. The protein localises to the target cell membrane. Antibacterial activity is decreased by serum. Antimicrobial peptide that acts by inducing concentration-dependent membrane disruption, implying a membrane-lytic mode of action. Acts with potent activity against Gram-positive bacteria (MIC=4.04-16.16 uM) including methicillin-resistant S.aureus (MRSA). Its activity on Gram-negative bacteria is controversial. Li and colleagues (2014) describe no activity towards E.coli and P.aeruginosa, while Kim and colleagues (2018) describe a potent activity towards P.aeruginosa (MIC=3.13-12.5 uM), and Luo and colleagues (2021) describe a potent activity against antibiotic-sensitive and -resistant Acinetobacter baumannii strains (MIC=3.2-10 uM). On S.aureus, possibly acts by impairing an unknown intracellular target and/or by interacting with the membrane, leading to the lateral expansion of the membrane area at high MIC concentrations, resulting in the formation of mesosome-like structures that leads to cell lysis. Shows moderate inhibition of P.aeruginosa biofilm formation. Administration of this peptide at sub-MIC concentrations in multiple treatments does not lead to resistance in S.aureus. Exhibits low toxicity and hemolytic activity against mammalian cell lines and BALB/c mice. In vivo, improves the survival rate of the MRSA infected BALB/c mice in the peritonitis model. This is Amphipathic peptide Hp1404 from Heterometrus petersii (Asian forest scorpion).